Consider the following 602-residue polypeptide: Sensor histidine kinase AtsR (602 aa).

2 helical membrane passes run 11-31 (IIVA…FLLF) and 182-202 (AIVM…LLLF). In terms of domain architecture, Histidine kinase spans 242–461 (MVSHELRTPL…EFVVTLPVEL (220 aa)). His245 carries the phosphohistidine; by autocatalysis modification. One can recognise a Response regulatory domain in the interval 484–601 (HALVVDDNEN…TLNGIVSRLR (118 aa)). Position 533 is a 4-aspartylphosphate (Asp533).

The protein resides in the cell inner membrane. It carries out the reaction ATP + protein L-histidine = ADP + protein N-phospho-L-histidine.. Member of a two-component regulatory system involved in control of gene expression; inhibits synthesis of (at least) the polyketide antibiotic thailandamide. Its two-component partner may be BTH_I0635. The chain is Sensor histidine kinase AtsR from Burkholderia thailandensis (strain ATCC 700388 / DSM 13276 / CCUG 48851 / CIP 106301 / E264).